We begin with the raw amino-acid sequence, 223 residues long: Adapter protein MecA (223 aa).

The protein belongs to the MecA family. In terms of assembly, homodimer.

Enables the recognition and targeting of unfolded and aggregated proteins to the ClpC protease or to other proteins involved in proteolysis. The polypeptide is Adapter protein MecA (Limosilactobacillus reuteri (strain DSM 20016) (Lactobacillus reuteri)).